The chain runs to 306 residues: Elongation factor Ts (306 aa).

The involved in Mg(2+) ion dislocation from EF-Tu stretch occupies residues 79-82 (TDFV).

The protein belongs to the EF-Ts family.

The protein localises to the cytoplasm. Its function is as follows. Associates with the EF-Tu.GDP complex and induces the exchange of GDP to GTP. It remains bound to the aminoacyl-tRNA.EF-Tu.GTP complex up to the GTP hydrolysis stage on the ribosome. This chain is Elongation factor Ts, found in Mesorhizobium japonicum (strain LMG 29417 / CECT 9101 / MAFF 303099) (Mesorhizobium loti (strain MAFF 303099)).